The primary structure comprises 576 residues: MAGUK p55 subfamily member 7 (576 aa).

L27 domains lie at Ser10–Ala64 and Pro65–Glu122. The region spanning Ile139–Ile220 is the PDZ domain. Residues Glu228–Leu298 form the SH3 domain. Residues His368–Lys560 enclose the Guanylate kinase-like domain.

The protein belongs to the MAGUK family.

It is found in the membrane. The protein localises to the cell junction. The protein resides in the tight junction. Its subcellular location is the adherens junction. Its function is as follows. Acts as an important adapter that promotes epithelial cell polarity and tight junction formation. Involved in the assembly of protein complexes at sites of cell-cell contact. The polypeptide is MAGUK p55 subfamily member 7 (mpp7) (Danio rerio (Zebrafish)).